A 192-amino-acid polypeptide reads, in one-letter code: N-terminal acetyltransferase A complex catalytic subunit NAA10 (192 aa).

Residues 2 to 152 enclose the N-acetyltransferase domain; sequence VCIRRATVDD…DAYDMRKNLK (151 aa).

Belongs to the acetyltransferase family. ARD1 subfamily. In terms of assembly, part of the NatA complex. Interacts with NAA15. In terms of tissue distribution, expressed in leaves, roots, shoots and flowers.

It catalyses the reaction N-terminal glycyl-[protein] + acetyl-CoA = N-terminal N(alpha)-acetylglycyl-[protein] + CoA + H(+). The enzyme catalyses N-terminal L-alanyl-[protein] + acetyl-CoA = N-terminal N(alpha)-acetyl-L-alanyl-[protein] + CoA + H(+). The catalysed reaction is N-terminal L-seryl-[protein] + acetyl-CoA = N-terminal N(alpha)-acetyl-L-seryl-[protein] + CoA + H(+). It carries out the reaction N-terminal L-valyl-[protein] + acetyl-CoA = N-terminal N(alpha)-acetyl-L-valyl-[protein] + CoA + H(+). It catalyses the reaction N-terminal L-cysteinyl-[protein] + acetyl-CoA = N-terminal N(alpha)-acetyl-L-cysteinyl-[protein] + CoA + H(+). The enzyme catalyses N-terminal L-threonyl-[protein] + acetyl-CoA = N-terminal N(alpha)-acetyl-L-threonyl-[protein] + CoA + H(+). Catalytic subunit of the NatA N-alpha-acetyltransferase complex. Required for male gametocyte development, embryogenesis, suspensor development and the formation of the quiescent center (QC) in the root meristem. Involved in plant immunity through the regulation of SNC1 and RPM1 stability. The sequence is that of N-terminal acetyltransferase A complex catalytic subunit NAA10 from Arabidopsis thaliana (Mouse-ear cress).